The following is an 845-amino-acid chain: MSSRRWFHPTISGIEAEKLLQEQGFDGSFLARLSSSNPGAFTLSVRRGNEVTHIKIQNNGDFFDLYGGEKFATLPELVQYYMENGELKEKNGQAIELKQPLICAEPTTERWFHGNLSGKEAEKLILERGKNGSFLVRESQSKPGDFVLSVRTDDKVTHVMIRWQDKKYDVGGGESFGTLSELIDHYKRNPMVETCGTVVHLRQPFNATRITAAGINARVEQLVKGGFWEEFESLQQDSRDTFSRNEGYKQENRLKNRYRNILPYDHTRVKLLDVEHSVAGAEYINANYIRLPTDGDLYNMSSSSESLNSSVPSCPACTAAQTQRNCSNCQLQNKTCVQCAVKSAILPYSNCATCSRKSDSLSKHKRSESSASSSPSSGSGSGPGSSGTSGVSSVNGPGTPTNLTSGTAGCLVGLLKRHSNDSSGAVSISMAEREREREREMFKTYIATQGCLLTQQVNTVTDFWNMVWQENTRVIVMTTKEYERGKEKCARYWPDEGRSEQFGHARIQCVSENSTSDYTLREFLVSWRDQPARRIFHYHFQVWPDHGVPADPGCVLNFLQDVNTRQSHLAQAGEKPGPICVHCSAGIGRTGTFIVIDMILDQIVRNGLDTEIDIQRTIQMVRSQRSGLVQTEAQYKFVYYAVQHYIQTLIARKRAEEQSLQVGREYTNIKYTGEIGNDSQRSPLPPAISSISLVPSKTPLTPTSADLGTGMGLSMGVGMGVGNKHASKQQPPLPVVNCNNNNNGIGNSGCSNGGGSSTTSSSNGSSNGNINALLGGIGLGLGGNMRKSNFYSDSLKQQQQREEQAPAGAGKMQQPAPPLRPRPGILKLLTSPVIFQQNSKTFPKT.

SH2 domains follow at residues 6-101 (WFHP…KQPL) and 111-205 (WFHG…RQPF). Residues 227-645 (FWEEFESLQQ…KFVYYAVQHY (419 aa)) enclose the Tyrosine-protein phosphatase domain. The PTPase insert (Cys/Ser-rich) stretch occupies residues 289 to 444 (IRLPTDGDLY…REREREMFKT (156 aa)). The tract at residues 362–402 (SKHKRSESSASSSPSSGSGSGPGSSGTSGVSSVNGPGTPTN) is disordered. Composition is skewed to low complexity over residues 369–378 (SSASSSPSSG) and 388–400 (TSGV…PGTP). Ser419 is modified (phosphoserine). Residues Asp545, 583-589 (CSAGIGR), and Gln630 contribute to the substrate site. Cys583 functions as the Phosphocysteine intermediate in the catalytic mechanism. The disordered stretch occupies residues 793–824 (DSLKQQQQREEQAPAGAGKMQQPAPPLRPRPG).

It belongs to the protein-tyrosine phosphatase family. Non-receptor class subfamily. As to quaternary structure, interacts with drpr isoform A. As to expression, expressed uniformly throughout all tissues during embryogenesis.

The protein resides in the cytoplasm. It catalyses the reaction O-phospho-L-tyrosyl-[protein] + H2O = L-tyrosyl-[protein] + phosphate. Required in all receptor tyrosine kinase signaling pathways. Functions downstream of the receptor tyrosine kinase torso, acting in concert with D-Raf via tailless. Also functions downstream of Egfr (epidermal growth factor receptor) and btl (fibroblast growth factor receptor). The SH2 domain suggests that csw effects its role by mediating heteromeric protein interactions. Maternally required for normal determination of cell fates at the termini of the embryo. Required for cell fate specification of the ventral ectoderm, in the developing embryonic CNS and for embryonic tracheal cell migration. Functions during imaginal development for proper formation of adult structures such as eyes, aristae, L5 wing vein and the tarsal claw. Dephosphorylates drpr isoform A which is required for the inhibition by drpr isoform A of glial cell engulfment of axonal debris produced following axonal injury. The sequence is that of Tyrosine-protein phosphatase corkscrew (csw) from Drosophila melanogaster (Fruit fly).